The primary structure comprises 1174 residues: Pesticidal crystal protein Cry1Fa (1174 aa).

Belongs to the delta endotoxin family.

Functionally, promotes colloidosmotic lysis by binding to the midgut epithelial cells of many lepidopteran larvae. The chain is Pesticidal crystal protein Cry1Fa (cry1Fa) from Bacillus thuringiensis subsp. aizawai.